Consider the following 1338-residue polypeptide: Insulin receptor substrate 2 (1338 aa).

The span at 1–12 shows a compositional bias: pro residues; it reads MASPPRHGPPGP. Disordered regions lie at residues 1–31 and 49–72; these read MASP…NHSV and VLRG…QPPR. The region spanning 16–144 is the PH domain; it reads DGPNLNNNNN…WYRALTDLVS (129 aa). Low complexity predominate over residues 19-28; that stretch reads NLNNNNNNNN. Positions 53 to 66 are enriched in gly residues; sequence PGAGGDEATAGGGS. The IRS-type PTB domain maps to 194–298; that stretch reads YREVWQVNLK…EAMKALKELF (105 aa). The interval 303 to 411 is disordered; that stretch reads RSKSQSSGSS…SHTLSGGCGG (109 aa). Ser-306 and Ser-346 each carry phosphoserine. Thr-350 is modified (phosphothreonine). Phosphoserine occurs at positions 365, 384, 388, and 391. Residue Arg-412 is modified to Omega-N-methylarginine. The segment at 428–537 is disordered; sequence SRSMSMPVAH…PPARDGGGGG (110 aa). The span at 444 to 453 shows a compositional bias: low complexity; it reads SPGSLSSSSG. The span at 459–471 shows a compositional bias: pro residues; the sequence is YPPPPGPHPPLPH. The span at 475–493 shows a compositional bias: low complexity; the sequence is HGPGQRPSSGSASASGSPS. Thr-520 is modified (phosphothreonine). Position 523 is a phosphoserine (Ser-523). Residue Thr-527 is modified to Phosphothreonine. Tyr-540 carries the phosphotyrosine; by INSR modification. The short motif at 540–543 is the YXXM motif 1 element; it reads YGYM. The residue at position 560 (Ser-560) is a Phosphoserine; by PLK1. Phosphoserine is present on Ser-577. Residues Thr-579 and Thr-580 each carry the phosphothreonine modification. Ser-594 is subject to Phosphoserine. A YXXM motif 2 motif is present at residues 598–601; sequence YTLM. 2 positions are modified to phosphoserine: Ser-608 and Ser-620. Residues Tyr-653 and Tyr-675 each carry the phosphotyrosine; by INSR modification. 2 short sequence motifs (YXXM motif) span residues 653–656 and 675–678; these read YMPM. Ser-679 and Ser-682 each carry phosphoserine. Residues 703–719 are compositionally biased toward low complexity; the sequence is PSAGPAGPAPTSAAGRT. Residues 703–739 form a disordered region; sequence PSAGPAGPAPTSAAGRTFPASGGGYKASSPAESSPED. Phosphoserine is present on residues Ser-735 and Ser-736. The short motif at 742–745 is the YXXM motif 5 element; the sequence is YMRM. Residue Ser-770 is modified to Phosphoserine. Residue Thr-779 is modified to Phosphothreonine. Residue Ser-805 is modified to Phosphoserine. The YXXM motif 6 signature appears at 823-826; that stretch reads YVLM. Ser-828 is subject to Phosphoserine. Residues 840–1101 form a disordered region; the sequence is EPQATPGPSQ…KPEAARVASP (262 aa). Residues 859–870 show a composition bias toward pro residues; the sequence is TQPPHPVVPSPV. Ser-915 carries the post-translational modification Phosphoserine. The residue at position 919 (Tyr-919) is a Phosphotyrosine; by INSR. Residues 938–967 show a composition bias toward low complexity; sequence LLASAASSSSLLSASSPASSLGSGTPGTSS. Ser-973 carries the post-translational modification Phosphoserine. The residue at position 978 (Tyr-978) is a Phosphotyrosine; by INSR. Residues 1013 to 1022 show a composition bias toward pro residues; the sequence is PYPPLPPRPS. The short motif at 1072–1075 is the YXXM motif 7 element; the sequence is YTEM. Residue Thr-1082 is modified to Phosphothreonine. Residues 1083–1093 show a composition bias toward pro residues; that stretch reads PPQPIAAPPKP. Ser-1100 carries the phosphoserine modification. Ser-1109 bears the Phosphoserine; by PLK1 mark. Positions 1121 to 1296 are disordered; it reads LQASQPPDPH…TRSLGGLISA (176 aa). Over residues 1150–1165 the composition is skewed to low complexity; it reads ETFSSTTTVTPVSPSF. The residue at position 1159 (Thr-1159) is a Phosphothreonine. Phosphoserine occurs at positions 1162, 1174, 1176, and 1186. The segment covering 1174 to 1183 has biased composition (polar residues); that stretch reads SASVENVSLR. Positions 1188–1198 are enriched in gly residues; it reads GGVGVGPGGGD. Ser-1203 bears the Phosphoserine mark. Residues 1224–1236 are compositionally biased toward gly residues; the sequence is QPGGLVGCPGSGG. Residue Tyr-1253 is modified to Phosphotyrosine; by INSR. The segment covering 1263–1277 has biased composition (pro residues); sequence GLPPQPQPPPPPLPQ. Lys-1331 is covalently cross-linked (Glycyl lysine isopeptide (Lys-Gly) (interchain with G-Cter in ubiquitin)).

As to quaternary structure, interacts with PHIP. Interacts with SH2B1; this interaction enhances leptin-induced activation of the PI3-kinase pathway. Interacts with GRB2. Interacts with PIK3R1. Interacts with DVL2; this interaction promotes the Wnt/beta-catenin signaling pathway. In terms of processing, phosphorylation fluctuates in a cell-cycle dependent manner with hyperphosphorylation during mitosis. Phosphorylated at Ser-560 and Ser-1109 by PLK1; these phosphorylations prevent the activation of the PI3K pathway upon growth factor stimulation by inhibiting the binding between IRS2 and the PI3K pathway components and increasing the level of IRS2 protein degradation. In addition, they prevent premature mitotic exit. Monoubiquitinated by NEDD4; leading to enhanced IGF1 signaling. During cell cycle, ubiquitination and proteasomal degradation are controlled by FZR1.

The protein localises to the cytoplasm. The protein resides in the cytosol. Its function is as follows. Signaling adapter protein that participates in the signal transduction from two prominent receptor tyrosine kinases, insulin receptor/INSR and insulin-like growth factor I receptor/IGF1R. Plays therefore an important role in development, growth, glucose homeostasis as well as lipid metabolism. Upon phosphorylation by the insulin receptor, functions as a signaling scaffold that propagates insulin action through binding to SH2 domain-containing proteins including the p85 regulatory subunit of PI3K, NCK1, NCK2, GRB2 or SHP2. Recruitment of GRB2 leads to the activation of the guanine nucleotide exchange factor SOS1 which in turn triggers the Ras/Raf/MEK/MAPK signaling cascade. Activation of the PI3K/AKT pathway is responsible for most of insulin metabolic effects in the cell, and the Ras/Raf/MEK/MAPK is involved in the regulation of gene expression and in cooperation with the PI3K pathway regulates cell growth and differentiation. Acts a positive regulator of the Wnt/beta-catenin signaling pathway through suppression of DVL2 autophagy-mediated degradation leading to cell proliferation. Plays a role in cell cycle progression by promoting a robust spindle assembly checkpoint (SAC) during M-phase. In macrophages, IL4-induced tyrosine phosphorylation of IRS2 leads to the recruitment and activation of phosphoinositide 3-kinase (PI3K). This is Insulin receptor substrate 2 (IRS2) from Homo sapiens (Human).